The following is a 551-amino-acid chain: Ubiquitin domain-containing protein DSK2b (551 aa).

In terms of domain architecture, Ubiquitin-like spans 18–93 (VAVNIRCSNG…IHMVRGSAPS (76 aa)). The disordered stretch occupies residues 88–127 (RGSAPSSAPPPAPAASQTTAPSVTRGVGSDNSSNLGGASP). STI1 domains follow at residues 143–184 (GNAM…QNLM) and 197–236 (NPQM…MREM). The segment covering 294-319 (QGVTTQGSDASNNSSTPNAGTGTIPN) has biased composition (polar residues). The disordered stretch occupies residues 294 to 336 (QGVTTQGSDASNNSSTPNAGTGTIPNANPLPNPWGATGGQTTA). 2 consecutive STI1 domains span residues 373–410 (SPLG…MNQL) and 414–449 (NPQL…MQQM). The interval 455 to 475 (SLSQNRNTASQDAGQTGAATG) is disordered. Low complexity predominate over residues 465–475 (QDAGQTGAATG). The UBA domain maps to 504–548 (PPEERYATQLQQLQEMGFYDRAENIRALLATNGNVNAAVERLLGS).

As to quaternary structure, interacts with 'Lys-48'-linked polyubiquitin chains via its UBA domain. Interacts with RPN10 via its ubiquitin-like domain. Interacts with PEX2 and PEX12. As to expression, ubiquitous.

The protein localises to the nucleus. It is found in the cytoplasm. Its function is as follows. Binds and presumably selects ubiquitin-conjugates for destruction. Prefers multiubiquitin chains rather than single ubiquitins, with a binding affinity for 'Lys-48'-linked ubiquitin chains. Acts as a ubiquitin receptor that associates with the 26S proteasomal docking subunit RPN10 for the indirect recognition of ubiquitinated substrates of ubiquitin/26S proteasome-mediated proteolysis (UPP). In Arabidopsis thaliana (Mouse-ear cress), this protein is Ubiquitin domain-containing protein DSK2b (DSK2B).